The sequence spans 1188 residues: Integrin alpha-11 (1188 aa).

The first 22 residues, 1–22 (MDLPRGLVVAWALSLWPGFTDT), serve as a signal peptide directing secretion. At 23–1141 (FNMDTRKPRV…ISKQEDWQVP (1119 aa)) the chain is on the extracellular side. 2 FG-GAP repeats span residues 24–85 (NMDT…NCTK) and 91–151 (VTLS…FSKT). Cys76 and Cys83 are disulfide-bonded. 2 N-linked (GlcNAc...) asparagine glycosylation sites follow: Asn82 and Asn95. Disulfide bonds link Cys121–Cys139 and Cys129–Cys159. The VWFA domain maps to 164-345 (DIVIVLDGSN…AALKDIVDAL (182 aa)). Asn291, Asn331, Asn358, Asn449, and Asn462 each carry an N-linked (GlcNAc...) asparagine glycan. 5 FG-GAP repeats span residues 355–406 (TNKN…VIPL), 411–461 (LKEF…TMHN), 462–527 (NRSL…LFVY), 528–586 (NGTL…SILK), and 590–650 (QRIT…FEPS). Positions 488, 490, 492, and 496 each coordinate Ca(2+). N-linked (GlcNAc...) asparagine glycosylation occurs at Asn528. The Ca(2+) site is built by Asp551, Asn553, Asp555, Asp559, Asp613, Asn615, Asp617, and Asp621. The N-linked (GlcNAc...) asparagine glycan is linked to Asn642. Intrachain disulfides connect Cys659-Cys668, Cys674-Cys729, and Cys781-Cys787. A glycan (N-linked (GlcNAc...) asparagine) is linked at Asn694. Asn857 carries an N-linked (GlcNAc...) asparagine glycan. The cysteines at positions 881 and 893 are disulfide-linked. Asn894, Asn973, Asn1031, Asn1039, and Asn1059 each carry an N-linked (GlcNAc...) asparagine glycan. Residues 1142-1164 (IWIIVGSTLGGLLLLALLVLALW) traverse the membrane as a helical segment. Residues 1165 to 1188 (KLGFFRSARRRREPGLDPTPKVLE) lie on the Cytoplasmic side of the membrane.

Belongs to the integrin alpha chain family. In terms of assembly, heterodimer of an alpha and a beta subunit. Alpha-11 associates with beta-1. Interacts with RAB21. According to PubMed:10464311, highest levels of expression in uterus and heart, intermediate levels in skeletal muscle and intermediate to low levels in pancreas, kidney and placenta. According to PubMed:10486209, also found in brain, colon, lung, small intestine, stomach, testis, salivary glands, thyroid glands and prostate. Very low levels in peripheral blood lymphocytes, fetal brain and fetal liver.

It is found in the membrane. Integrin alpha-11/beta-1 is a receptor for collagen. The chain is Integrin alpha-11 (ITGA11) from Homo sapiens (Human).